We begin with the raw amino-acid sequence, 398 residues long: GPI mannosyltransferase 1 (398 aa).

The next 9 membrane-spanning stretches (helical) occupy residues 4–24 (LKYL…FGLY), 79–99 (WYHF…LIIL), 114–136 (MILS…GSAE), 156–176 (VILS…PIIY), 209–229 (IIIT…KYGW), 271–291 (IEKI…PLIF), 305–325 (FVFV…FLIF), 341–361 (ITGI…LYFA), and 375–395 (GLMY…MKFI).

It belongs to the PIGM family.

The protein localises to the endoplasmic reticulum membrane. It participates in glycolipid biosynthesis; glycosylphosphatidylinositol-anchor biosynthesis. In terms of biological role, mannosyltransferase involved in glycosylphosphatidylinositol-anchor biosynthesis. Transfers the first alpha-1,4-mannose to GlcN-acyl-PI during GPI precursor assembly. Required for cell wall integrity. The polypeptide is GPI mannosyltransferase 1 (GPI14) (Candida albicans (strain SC5314 / ATCC MYA-2876) (Yeast)).